The primary structure comprises 410 residues: Probable peptidoglycan glycosyltransferase FtsW (410 aa).

A run of 9 helical transmembrane segments spans residues 39 to 59 (LDPLLIWSATGLLLIGLVMVY), 78 to 98 (YFLLRHAMFLAVGIGAGLAAF), 108 to 128 (FAPWLFLIGVMLLVVVLIPGV), 177 to 197 (GFLPMAAMILLVGFLLLGEPD), 198 to 218 (FGAFVVITAIAFGVLFLGGIN), 221 to 241 (VFALLALVAVIGFMLLIWLSP), 303 to 323 (IAEELGFAGVLTVIALFAILI), 342 to 362 (GLVAMGIGLWLGVQSFINMGV), and 374 to 394 (LPLMSFGGSGIVANCLALAIL).

The protein belongs to the SEDS family. FtsW subfamily.

The protein localises to the cell inner membrane. The catalysed reaction is [GlcNAc-(1-&gt;4)-Mur2Ac(oyl-L-Ala-gamma-D-Glu-L-Lys-D-Ala-D-Ala)](n)-di-trans,octa-cis-undecaprenyl diphosphate + beta-D-GlcNAc-(1-&gt;4)-Mur2Ac(oyl-L-Ala-gamma-D-Glu-L-Lys-D-Ala-D-Ala)-di-trans,octa-cis-undecaprenyl diphosphate = [GlcNAc-(1-&gt;4)-Mur2Ac(oyl-L-Ala-gamma-D-Glu-L-Lys-D-Ala-D-Ala)](n+1)-di-trans,octa-cis-undecaprenyl diphosphate + di-trans,octa-cis-undecaprenyl diphosphate + H(+). Its pathway is cell wall biogenesis; peptidoglycan biosynthesis. Functionally, peptidoglycan polymerase that is essential for cell division. In Aromatoleum aromaticum (strain DSM 19018 / LMG 30748 / EbN1) (Azoarcus sp. (strain EbN1)), this protein is Probable peptidoglycan glycosyltransferase FtsW.